The sequence spans 169 residues: Ribosome maturation factor RimM (169 aa).

One can recognise a PRC barrel domain in the interval 95 to 169 (EDGYYWTDLI…QITVDWELGY (75 aa)).

This sequence belongs to the RimM family. In terms of assembly, binds ribosomal protein uS19.

It is found in the cytoplasm. Functionally, an accessory protein needed during the final step in the assembly of 30S ribosomal subunit, possibly for assembly of the head region. Essential for efficient processing of 16S rRNA. May be needed both before and after RbfA during the maturation of 16S rRNA. It has affinity for free ribosomal 30S subunits but not for 70S ribosomes. This is Ribosome maturation factor RimM from Nitrosomonas europaea (strain ATCC 19718 / CIP 103999 / KCTC 2705 / NBRC 14298).